Here is a 179-residue protein sequence, read N- to C-terminus: Large ribosomal subunit protein uL5 (179 aa).

The protein belongs to the universal ribosomal protein uL5 family. Part of the 50S ribosomal subunit; part of the 5S rRNA/L5/L18/L25 subcomplex. Contacts the 5S rRNA and the P site tRNA. Forms a bridge to the 30S subunit in the 70S ribosome.

Its function is as follows. This is one of the proteins that bind and probably mediate the attachment of the 5S RNA into the large ribosomal subunit, where it forms part of the central protuberance. In the 70S ribosome it contacts protein S13 of the 30S subunit (bridge B1b), connecting the 2 subunits; this bridge is implicated in subunit movement. Contacts the P site tRNA; the 5S rRNA and some of its associated proteins might help stabilize positioning of ribosome-bound tRNAs. This chain is Large ribosomal subunit protein uL5, found in Caldanaerobacter subterraneus subsp. tengcongensis (strain DSM 15242 / JCM 11007 / NBRC 100824 / MB4) (Thermoanaerobacter tengcongensis).